A 23-amino-acid chain; its full sequence is Protein YsaE (23 aa).

In Escherichia coli (strain K12), this protein is Protein YsaE.